An 820-amino-acid polypeptide reads, in one-letter code: G-type lectin S-receptor-like serine/threonine-protein kinase At1g11280 (820 aa).

Positions 1–28 are cleaved as a signal peptide; that stretch reads MGIHLGEIGIVLFPWFLWLSLFLSCGYA. The region spanning 29 to 148 is the Bulb-type lectin domain; that stretch reads AITISSPLTL…VSENLLWQSF (120 aa). Topologically, residues 29–434 are extracellular; sequence AITISSPLTL…SELAGSRRTK (406 aa). N-linked (GlcNAc...) asparagine glycans are attached at residues Asn-57, Asn-92, Asn-98, Asn-241, and Asn-272. Residues 283–319 form the EGF-like domain; it reads PANLCDLYGACGPFGLCVTSNPTKCKCMKGFVPKYKE. Cystine bridges form between Cys-287/Cys-299 and Cys-293/Cys-307. N-linked (GlcNAc...) asparagine glycosylation is found at Asn-325, Asn-341, and Asn-384. In terms of domain architecture, PAN spans 338-422; the sequence is CQANLSTKTQ…VGGEFLSIRL (85 aa). 2 disulfides stabilise this stretch: Cys-377/Cys-398 and Cys-381/Cys-387. Residues 435 to 455 traverse the membrane as a helical segment; that stretch reads IIVGSISLSIFVILAFGSYKY. The Cytoplasmic portion of the chain corresponds to 456–820; that stretch reads WRYRAKQNVG…HVTQTEIYGR (365 aa). One can recognise a Protein kinase domain in the interval 505–792; sequence FNVSNKLGQG…DLPRPKQPLF (288 aa). Residues 511–519 and Lys-533 each bind ATP; that span reads LGQGGFGPV. Ser-539 and Ser-554 each carry phosphoserine. The interval 594–611 is caM-binding; that stretch reads TLKLQIDWPKRFNIIQGV. The active-site Proton acceptor is Asp-630. Phosphoserine occurs at positions 634 and 647. A Phosphothreonine modification is found at Thr-664. 3 positions are modified to phosphoserine: Ser-707, Ser-708, and Ser-808. Phosphothreonine is present on Thr-815.

The protein belongs to the protein kinase superfamily. Ser/Thr protein kinase family.

The protein localises to the cell membrane. The catalysed reaction is L-seryl-[protein] + ATP = O-phospho-L-seryl-[protein] + ADP + H(+). It catalyses the reaction L-threonyl-[protein] + ATP = O-phospho-L-threonyl-[protein] + ADP + H(+). The polypeptide is G-type lectin S-receptor-like serine/threonine-protein kinase At1g11280 (Arabidopsis thaliana (Mouse-ear cress)).